Here is a 219-residue protein sequence, read N- to C-terminus: 2-hydroxy-3-keto-5-methylthiopentenyl-1-phosphate phosphatase (219 aa).

It belongs to the HAD-like hydrolase superfamily. MtnX family.

It carries out the reaction 2-hydroxy-5-methylsulfanyl-3-oxopent-1-enyl phosphate + H2O = 1,2-dihydroxy-5-(methylsulfanyl)pent-1-en-3-one + phosphate. It participates in amino-acid biosynthesis; L-methionine biosynthesis via salvage pathway; L-methionine from S-methyl-5-thio-alpha-D-ribose 1-phosphate: step 4/6. Functionally, dephosphorylates 2-hydroxy-3-keto-5-methylthiopentenyl-1-phosphate (HK-MTPenyl-1-P) yielding 1,2-dihydroxy-3-keto-5-methylthiopentene (DHK-MTPene). This Bacillus mycoides (strain KBAB4) (Bacillus weihenstephanensis) protein is 2-hydroxy-3-keto-5-methylthiopentenyl-1-phosphate phosphatase.